The sequence spans 363 residues: Cysteine proteinase 15A (363 aa).

The N-terminal stretch at 1–18 (MDRRFLFALFLFAAVATA) is a signal peptide. A propeptide spans 19-131 (VTDDTNNDDF…QKAPILPTTN (113 aa)) (activation peptide). Disulfide bonds link Cys153–Cys203 and Cys187–Cys236. Cys156 is a catalytic residue. A glycan (N-linked (GlcNAc...) asparagine) is linked at Asn249. Cys292 and Cys347 form a disulfide bridge. Catalysis depends on residues His299 and Asn326.

It belongs to the peptidase C1 family.

This chain is Cysteine proteinase 15A, found in Pisum sativum (Garden pea).